Here is a 1404-residue protein sequence, read N- to C-terminus: DNA-directed RNA polymerase subunit beta' (1404 aa).

Zn(2+)-binding residues include C70, C72, C85, and C88. Residues D460, D462, and D464 each coordinate Mg(2+). 4 residues coordinate Zn(2+): C814, C888, C895, and C898.

This sequence belongs to the RNA polymerase beta' chain family. The RNAP catalytic core consists of 2 alpha, 1 beta, 1 beta' and 1 omega subunit. When a sigma factor is associated with the core the holoenzyme is formed, which can initiate transcription. The cofactor is Mg(2+). Requires Zn(2+) as cofactor.

It catalyses the reaction RNA(n) + a ribonucleoside 5'-triphosphate = RNA(n+1) + diphosphate. DNA-dependent RNA polymerase catalyzes the transcription of DNA into RNA using the four ribonucleoside triphosphates as substrates. The sequence is that of DNA-directed RNA polymerase subunit beta' from Shewanella loihica (strain ATCC BAA-1088 / PV-4).